The primary structure comprises 161 residues: Allophycocyanin alpha chain (161 aa).

The residue at position 71 (Asn71) is an N4-methylasparagine. Residue Cys81 participates in (2R,3E)-phycocyanobilin binding.

Belongs to the phycobiliprotein family. As to quaternary structure, heterodimer of an alpha and a beta chain. Post-translationally, contains one covalently linked phycocyanobilin chromophore.

It localises to the cellular thylakoid membrane. In terms of biological role, light-harvesting photosynthetic bile pigment-protein from the phycobiliprotein complex. Allophycocyanin has a maximum absorption at approximately 650 nanometers. The sequence is that of Allophycocyanin alpha chain (apcA) from Thermosynechococcus vestitus (strain NIES-2133 / IAM M-273 / BP-1).